The sequence spans 461 residues: Cysteine--tRNA ligase (461 aa).

Cys-30 provides a ligand contact to Zn(2+). Residues 32–42 (VTIYDLCHIGH) carry the 'HIGH' region motif. Residues Cys-211, His-236, and Glu-240 each coordinate Zn(2+). The 'KMSKS' region motif lies at 268-272 (KMSKS). Lys-271 serves as a coordination point for ATP.

This sequence belongs to the class-I aminoacyl-tRNA synthetase family. Monomer. The cofactor is Zn(2+).

It localises to the cytoplasm. The catalysed reaction is tRNA(Cys) + L-cysteine + ATP = L-cysteinyl-tRNA(Cys) + AMP + diphosphate. The polypeptide is Cysteine--tRNA ligase (Shewanella sp. (strain W3-18-1)).